The primary structure comprises 348 residues: Spermidine/putrescine import ATP-binding protein PotA (348 aa).

Positions 6 to 236 (IRLVNVTKEY…PKNVFVADFI (231 aa)) constitute an ABC transporter domain. 38–45 (GPSGCGKT) provides a ligand contact to ATP.

This sequence belongs to the ABC transporter superfamily. Spermidine/putrescine importer (TC 3.A.1.11.1) family. In terms of assembly, the complex is composed of two ATP-binding proteins (PotA), two transmembrane proteins (PotB and PotC) and a solute-binding protein (PotD).

Its subcellular location is the cell membrane. The enzyme catalyses ATP + H2O + polyamine-[polyamine-binding protein]Side 1 = ADP + phosphate + polyamineSide 2 + [polyamine-binding protein]Side 1.. Part of the ABC transporter complex PotABCD involved in spermidine/putrescine import. Responsible for energy coupling to the transport system. The protein is Spermidine/putrescine import ATP-binding protein PotA of Desulfitobacterium hafniense (strain Y51).